A 470-amino-acid chain; its full sequence is Serine/threonine-protein kinase PEPKR2 (470 aa).

The region spanning 107–355 is the Protein kinase domain; it reads YVFGRNIGKG…ADEVLRHPWI (249 aa). ATP contacts are provided by residues 113–121 and K136; that span reads IGKGKFGSV. The active-site Proton acceptor is D224. Over residues 377 to 386 the composition is skewed to polar residues; the sequence is GSSTCLQNRS. Disordered stretches follow at residues 377 to 419 and 441 to 464; these read GSST…EEED and RSRV…TSTS. The segment covering 387-403 has biased composition (basic and acidic residues); sequence PTEKTDLNRADREKKIP. The segment covering 445 to 464 has biased composition (polar residues); the sequence is CSPTNNPIEQQHSSNLTSTS.

This sequence belongs to the protein kinase superfamily. Ser/Thr protein kinase family.

It carries out the reaction L-seryl-[protein] + ATP = O-phospho-L-seryl-[protein] + ADP + H(+). The catalysed reaction is L-threonyl-[protein] + ATP = O-phospho-L-threonyl-[protein] + ADP + H(+). This chain is Serine/threonine-protein kinase PEPKR2 (PEPKR2), found in Arabidopsis thaliana (Mouse-ear cress).